A 140-amino-acid polypeptide reads, in one-letter code: Large ribosomal subunit protein uL14 (140 aa).

Belongs to the universal ribosomal protein uL14 family.

In Aedes aegypti (Yellowfever mosquito), this protein is Large ribosomal subunit protein uL14 (RpL23-A).